Reading from the N-terminus, the 702-residue chain is Pseudouridylate synthase PUS7L (702 aa).

Position 79 is a phosphoserine (Ser-79). The segment at 84 to 116 (NSEGAADLPGCSDGDRSHQSDSEKENSVNSVTS) is disordered. The span at 96-109 (DGDRSHQSDSEKEN) shows a compositional bias: basic and acidic residues. The active-site Nucleophile is the Asp-339. Residues 424 to 646 (GFVNYYGPQR…PGCYRHIVKH (223 aa)) enclose the TRUD domain.

It belongs to the pseudouridine synthase TruD family.

The enzyme catalyses a uridine in mRNA = a pseudouridine in mRNA. Its function is as follows. Pseudouridine synthase that catalyzes pseudouridylation of mRNAs. The polypeptide is Pseudouridylate synthase PUS7L (Mus musculus (Mouse)).